We begin with the raw amino-acid sequence, 645 residues long: Protein LHY (645 aa).

Position 6 is a phosphoserine (S6). An HTH myb-type domain is found at 19-73 (TITKQRERWTEDEHERFLEALRLYGRAWQRIEEHIGTKTAVQIRSHAQKFFTKLE). Residues 46 to 69 (WQRIEEHIGTKTAVQIRSHAQKFF) constitute a DNA-binding region (H-T-H motif). 4 disordered regions span residues 89–127 (IEIP…AKLV), 149–212 (EKTS…GTTV), 410–437 (QNLA…ADSK), and 458–500 (AQKK…TDEN). Polar residues predominate over residues 110-120 (NNGTSSSQVSS). Basic and acidic residues predominate over residues 149-158 (EKTSTGKENQ). Residues 159–169 (DENCSGVSTVN) are compositionally biased toward polar residues. Positions 197-207 (VPKKNKDKDGN) are enriched in basic and acidic residues. The span at 468–478 (SCGSNTPSGSD) shows a compositional bias: polar residues. The segment covering 483–498 (ALDKMEKDKEDVKETD) has biased composition (basic and acidic residues).

As to quaternary structure, homodimer or heterodimer with CCA1. Interacts with CCA1 (via internal domain); independently of photoperiod. Functions probably as part of a large complex. Interacts with CKB1 and CKB3. Interacts with LNK1 and LNK2. In terms of processing, phosphorylated by CK2. Expressed in leaves, roots, stems, flowers and siliques.

It is found in the nucleus. Functionally, transcription factor involved in the circadian clock. Binds to the promoter region of APRR1/TOC1 and TCP21/CHE to repress their transcription. Represses both CCA1 and itself. May recognize the promoter of JMJ14 to regulates its expression during the night in a circadian manner. The chain is Protein LHY from Arabidopsis thaliana (Mouse-ear cress).